A 227-amino-acid polypeptide reads, in one-letter code: Protein rapunzel (227 aa).

The helical transmembrane segment at 179–196 (LAYLFCIGFIALMGYYGI) threads the bilayer.

The protein localises to the membrane. This is Protein rapunzel from Danio rerio (Zebrafish).